The primary structure comprises 302 residues: Ribosomal protein L11 methyltransferase (302 aa).

S-adenosyl-L-methionine contacts are provided by threonine 155, glycine 176, aspartate 198, and asparagine 239.

This sequence belongs to the methyltransferase superfamily. PrmA family.

It localises to the cytoplasm. The enzyme catalyses L-lysyl-[protein] + 3 S-adenosyl-L-methionine = N(6),N(6),N(6)-trimethyl-L-lysyl-[protein] + 3 S-adenosyl-L-homocysteine + 3 H(+). Its function is as follows. Methylates ribosomal protein L11. This is Ribosomal protein L11 methyltransferase from Caldicellulosiruptor saccharolyticus (strain ATCC 43494 / DSM 8903 / Tp8T 6331).